The sequence spans 143 residues: Protein SLC31A2 (143 aa).

Topologically, residues 1-22 (MAMHFIFSDTAVLLFDFWSVHS) are extracellular. A helical membrane pass occupies residues 23–43 (PAGMALSVLVLLLLAVLYEGI). Topologically, residues 44–93 (KVGKAKLLNQVLVNLPTSISQQTIAETDGDSAGSDSFPVGRTHHRWYLCH) are cytoplasmic. The residue at position 77 (Ser77) is a Phosphoserine. A helical membrane pass occupies residues 94 to 114 (FGQSLIHVIQVVIGYFIMLAV). The Extracellular segment spans residues 115 to 119 (MSYNT). A helical transmembrane segment spans residues 120 to 140 (WIFLGVVLGSAVGYYLAYPLL). Over 141-143 (STA) the chain is Cytoplasmic.

This sequence belongs to the copper transporter (Ctr) (TC 1.A.56) family. SLC31A subfamily. Oligomer. Interacts with SLC31A1; this interaction stabilizes SLC31A2 and protects it from ubiquitination and the subsequent degradation. Ubiquitinated; ubiquitination and the subsequent proteasomal degradation are prevent by SLC31A1 that stabilizes it. In terms of tissue distribution, ubiquitous with high expression in placenta and heart.

Its subcellular location is the membrane. The protein resides in the cytoplasmic vesicle membrane. It localises to the late endosome membrane. The protein localises to the lysosome membrane. Its function is as follows. Does not function as a copper(1+) importer in vivo. However, in vitro functions as a low-affinity copper(1+) importer. Regulator of SLC31A1 which facilitates the cleavage of the SLC31A1 ecto-domain or which stabilizes the truncated form of SLC31A1 (Truncated CTR1 form), thereby drives the SLC31A1 truncated form-dependent endosomal copper export and modulates the copper and cisplatin accumulation via SLC31A1. The polypeptide is Protein SLC31A2 (Homo sapiens (Human)).